The primary structure comprises 363 residues: NAD(P)H-quinone oxidoreductase subunit 1, chloroplastic (363 aa).

Helical transmembrane passes span 30 to 50 (LVPIFTPVSGITIGVLVIVWL), 98 to 118 (FSIGPSIAVISILLSYSVIPF), 127 to 147 (LSIGVFLWIAISSIAPIGLLM), 248 to 268 (YSGIKFGLFYVASYLNLLVSS), 300 to 320 (VFGTTIGILITLAKAYLFLFI), and 336 to 356 (LLNLGWKFLLPISLGNLLLTT).

Belongs to the complex I subunit 1 family. As to quaternary structure, NDH is composed of at least 16 different subunits, 5 of which are encoded in the nucleus.

It is found in the plastid. The protein resides in the chloroplast thylakoid membrane. It catalyses the reaction a plastoquinone + NADH + (n+1) H(+)(in) = a plastoquinol + NAD(+) + n H(+)(out). The enzyme catalyses a plastoquinone + NADPH + (n+1) H(+)(in) = a plastoquinol + NADP(+) + n H(+)(out). In terms of biological role, NDH shuttles electrons from NAD(P)H:plastoquinone, via FMN and iron-sulfur (Fe-S) centers, to quinones in the photosynthetic chain and possibly in a chloroplast respiratory chain. The immediate electron acceptor for the enzyme in this species is believed to be plastoquinone. Couples the redox reaction to proton translocation, and thus conserves the redox energy in a proton gradient. The sequence is that of NAD(P)H-quinone oxidoreductase subunit 1, chloroplastic from Drimys granadensis.